Reading from the N-terminus, the 315-residue chain is Ribosomal protein L11 methyltransferase (315 aa).

The S-adenosyl-L-methionine site is built by threonine 152, glycine 185, aspartate 207, and asparagine 249.

The protein belongs to the methyltransferase superfamily. PrmA family.

It is found in the cytoplasm. The enzyme catalyses L-lysyl-[protein] + 3 S-adenosyl-L-methionine = N(6),N(6),N(6)-trimethyl-L-lysyl-[protein] + 3 S-adenosyl-L-homocysteine + 3 H(+). Functionally, methylates ribosomal protein L11. The sequence is that of Ribosomal protein L11 methyltransferase from Geotalea uraniireducens (strain Rf4) (Geobacter uraniireducens).